A 353-amino-acid polypeptide reads, in one-letter code: MTAHLPQEISSRCSTTNIMEPHSRRQQDGEEKMPLQAEDIRPEIKDDLYDPSYQDEEGPPPKLEYVWRNIIFMALLHVGALYGITLVPSCKVYTWLLGVFYNVVAGLGITAGAHRLWSHRTYKARLPLRIFLIMANTMAFQNDVYEWARDHRAHHKFSETHADPHNSRRGFFFSHVGWLLVRKHPAVKEKGKNLDMSDLKAEKLVMFQRRYYKLAVTLMFIILPTLVPWYLWGETFQHSLCVSNFLRYAVLLNFTWLVNSAAHLYGYRPYDRGIGARENPFVSMASLGEGFHNYHHTFPYDYSVSEYRWHINFTTFFIDCMAALGLAYDRKKVSKAVVLARIKRTGDGSHKSS.

Residues 1–42 form a disordered region; that stretch reads MTAHLPQEISSRCSTTNIMEPHSRRQQDGEEKMPLQAEDIRP. Topologically, residues 1-66 are cytoplasmic; it reads MTAHLPQEIS…EGPPPKLEYV (66 aa). Over residues 8 to 18 the composition is skewed to polar residues; the sequence is EISSRCSTTNI. Residues 21–42 are compositionally biased toward basic and acidic residues; it reads PHSRRQQDGEEKMPLQAEDIRP. A helical transmembrane segment spans residues 67–87; sequence WRNIIFMALLHVGALYGITLV. Asn-69 is a binding site for substrate. Residues 88–91 lie on the Lumenal side of the membrane; the sequence is PSCK. A helical membrane pass occupies residues 92-112; that stretch reads VYTWLLGVFYNVVAGLGITAG. At 113-211 the chain is on the cytoplasmic side; sequence AHRLWSHRTY…EKLVMFQRRY (99 aa). Positions 114 and 119 each coordinate Fe cation. Positions 114 to 119 match the Histidine box-1 motif; that stretch reads HRLWSH. 3 residues coordinate substrate: Asn-142, Arg-149, and Asp-150. Positions 151, 154, and 155 each coordinate Fe cation. Residues 151 to 155 carry the Histidine box-2 motif; the sequence is HRAHH. Substrate-binding residues include Arg-182 and Lys-183. A helical membrane pass occupies residues 212–231; the sequence is YKLAVTLMFIILPTLVPWYL. The Lumenal segment spans residues 232–235; it reads WGET. The helical transmembrane segment at 236 to 257 threads the bilayer; the sequence is FQHSLCVSNFLRYAVLLNFTWL. Trp-256 lines the substrate pocket. The Cytoplasmic portion of the chain corresponds to 258-353; sequence VNSAAHLYGY…RTGDGSHKSS (96 aa). Positions 263, 292, 295, and 296 each coordinate Fe cation. A Histidine box-3 motif is present at residues 292 to 296; the sequence is HNYHH.

Belongs to the fatty acid desaturase type 1 family. Fe(2+) is required as a cofactor. In terms of tissue distribution, detected in heart, but not in brain, liver, skin or adipose tissue.

It is found in the endoplasmic reticulum membrane. It localises to the microsome membrane. The enzyme catalyses octadecanoyl-CoA + 2 Fe(II)-[cytochrome b5] + O2 + 2 H(+) = (9Z)-octadecenoyl-CoA + 2 Fe(III)-[cytochrome b5] + 2 H2O. It catalyses the reaction hexadecanoyl-CoA + 2 Fe(II)-[cytochrome b5] + O2 + 2 H(+) = (9Z)-hexadecenoyl-CoA + 2 Fe(III)-[cytochrome b5] + 2 H2O. Functionally, stearoyl-CoA desaturase that utilizes O(2) and electrons from reduced cytochrome b5 to introduce the first double bond into saturated fatty acyl-CoA substrates. Catalyzes the insertion of a cis double bond at the delta-9 position into fatty acyl-CoA substrates including palmitoyl-CoA and stearoyl-CoA. Required for the biosynthesis of membrane phospholipids, cholesterol esters and triglycerides. This chain is Stearoyl-CoA desaturase 4, found in Mus musculus (Mouse).